A 582-amino-acid chain; its full sequence is Formate--tetrahydrofolate ligase (582 aa).

ATP is bound at residue 65-72 (TPLGEGKT).

This sequence belongs to the formate--tetrahydrofolate ligase family.

It catalyses the reaction (6S)-5,6,7,8-tetrahydrofolate + formate + ATP = (6R)-10-formyltetrahydrofolate + ADP + phosphate. The protein operates within one-carbon metabolism; tetrahydrofolate interconversion. In Vibrio cholerae serotype O1 (strain ATCC 39315 / El Tor Inaba N16961), this protein is Formate--tetrahydrofolate ligase.